The following is a 1040-amino-acid chain: Activated CDC42 kinase 1 (1040 aa).

An SAM-like domain region spans residues 1-110 (MQPEEGTGWL…PSPTPGGLAG (110 aa)). The tract at residues 86–109 (EAEFPSHHSQSTFRKPSPTPGGLA) is disordered. At T113 the chain carries Phosphothreonine. The 260-residue stretch at 126–385 (LRLLEKLGDG…PTFVALRDFL (260 aa)) folds into the Protein kinase domain. Residues 132–140 (LGDGSFGVV) and K158 contribute to the ATP site. Residue D252 is the Proton acceptor of the active site. Y284 carries the phosphotyrosine; by SRC and autocatalysis modification. One can recognise an SH3 domain in the interval 388 to 448 (AQPTDMRALQ…PRNVVTSVAG (61 aa)). The tract at residues 505–527 (RPTQHLGRMKKPTYDPVSEDPDP) is disordered. The residue at position 518 (Y518) is a Phosphotyrosine. The interval 623 to 652 (DWDARPLPPPPAYDDVAQDEDDFEVCSINS) is required for interaction with SRC. The required for interaction with NEDD4 stretch occupies residues 632-635 (PPAY). The segment at 722-824 (TGQLTPSPTP…MPTTQSFASD (103 aa)) is disordered. Residues 733 to 876 (GDDKPQVPPR…PYLERYQRFL (144 aa)) are EBD domain. Composition is skewed to pro residues over residues 738–749 (QVPPRVPIPPRP) and 772–783 (PSSPPRVPPREP). Residues 802–812 (PLPHRLSSSPG) are compositionally biased toward low complexity. Position 827 is a phosphotyrosine (Y827). Position 839 is an omega-N-methylarginine (R839). A phosphotyrosine mark is found at Y859 and Y872. S881 is subject to Phosphoserine. Residues 881-957 (SPEEPAALPV…CPGDGQEAAR (77 aa)) are disordered. Pro residues predominate over residues 888–903 (LPVPPLLPPPSTPAPA). Polar residues predominate over residues 922-931 (NFSTNNSNPG). Positions 958–998 (PADKVQMLQAMVHGVTTEECQAALRSHSWSIQRAAQYLKVE) constitute a UBA domain.

This sequence belongs to the protein kinase superfamily. Tyr protein kinase family. In terms of assembly, homodimer. Interacts with CDC42. Interacts with CSPG4 (activated). Interacts with MERTK (activated); stimulates autophosphorylation. May interact (phosphorylated) with HSP90AB1; maintains kinase activity. Interacts with NPHP1. Interacts with SNX9 (via SH3 domain). Interacts with SRC (via SH2 and SH3 domain). Interacts with EGFR, and this interaction is dependent on EGF stimulation and kinase activity of EGFR. Interacts (via kinase domain) with AKT1. Part of a collagen stimulated complex involved in cell migration composed of CDC42, CRK, TNK2 and BCAR1/p130cas. Interacts with BCAR1/p130cas via SH3 domains. Forms complexes with GRB2 and numerous receptor tyrosine kinases (RTK) including LTK, AXL or PDGFRL, in which GRB2 promotes RTK recruitment by TNK2. Interacts with NEDD4 (via WW3 domain). NEDD4L and EGF promote association with NEDD4. Mg(2+) is required as a cofactor. Post-translationally, autophosphorylation regulates kinase activity. Phosphorylation on Tyr-518 is required for interaction with SRC and is observed during association with clathrin-coated pits. Polyubiquitinated by NEDD4 and NEDD4L. Degradation can be induced by EGF and is lysosome-dependent.

The protein resides in the cell membrane. It localises to the nucleus. It is found in the endosome. The protein localises to the cell junction. Its subcellular location is the adherens junction. The protein resides in the cytoplasmic vesicle membrane. It localises to the cytoplasmic vesicle. It is found in the clathrin-coated vesicle. The protein localises to the membrane. Its subcellular location is the clathrin-coated pit. The protein resides in the cytoplasm. It localises to the cytosol. The catalysed reaction is L-tyrosyl-[protein] + ATP = O-phospho-L-tyrosyl-[protein] + ADP + H(+). The enzyme catalyses L-seryl-[protein] + ATP = O-phospho-L-seryl-[protein] + ADP + H(+). It carries out the reaction L-threonyl-[protein] + ATP = O-phospho-L-threonyl-[protein] + ADP + H(+). Non-receptor tyrosine-protein and serine/threonine-protein kinase that is implicated in cell spreading and migration, cell survival, cell growth and proliferation. Transduces extracellular signals to cytosolic and nuclear effectors. Phosphorylates AKT1, AR, MCF2, WASL and WWOX. Implicated in trafficking and clathrin-mediated endocytosis through binding to epidermal growth factor receptor (EGFR) and clathrin. Binds to both poly- and mono-ubiquitin and regulates ligand-induced degradation of EGFR, thereby contributing to the accumulation of EGFR at the limiting membrane of early endosomes. Downstream effector of CDC42 which mediates CDC42-dependent cell migration via phosphorylation of BCAR1. May be involved both in adult synaptic function and plasticity and in brain development. Activates AKT1 by phosphorylating it on 'Tyr-176'. Phosphorylates AR on 'Tyr-267' and 'Tyr-363', thereby promoting its recruitment to androgen-responsive enhancers (AREs). Phosphorylates WWOX on 'Tyr-287'. Phosphorylates MCF2, thereby enhancing its activity as a guanine nucleotide exchange factor (GEF) toward Rho family proteins. Contributes to the control of AXL receptor levels. Confers metastatic properties on cancer cells and promotes tumor growth by negatively regulating tumor suppressor such as WWOX and positively regulating pro-survival factors such as AKT1 and AR. This Rattus norvegicus (Rat) protein is Activated CDC42 kinase 1.